The chain runs to 235 residues: Sugar fermentation stimulation protein homolog (235 aa).

The protein belongs to the SfsA family.

This chain is Sugar fermentation stimulation protein homolog, found in Bartonella henselae (strain ATCC 49882 / DSM 28221 / CCUG 30454 / Houston 1) (Rochalimaea henselae).